The sequence spans 561 residues: Arf-GAP domain and FG repeat-containing protein 1 (561 aa).

One can recognise an Arf-GAP domain in the interval 11 to 135; that stretch reads EKHLKMLRDM…WYVPPEQAKV (125 aa). The C4-type zinc finger occupies 29 to 52; that stretch reads CFDCDQRGPTYVNMTVGSFVCTSC. A Phosphoserine modification is found at Ser167. The tract at residues 170–193 is disordered; the sequence is ALHLNKGTPSQSPVVGRSQGQQQE. Residues 176-191 show a composition bias toward polar residues; the sequence is GTPSQSPVVGRSQGQQ. A Phosphothreonine modification is found at Thr177. Phosphoserine occurs at positions 181 and 362. O-linked (GlcNAc) serine glycosylation occurs at Ser367. Residues 413 to 433 form a disordered region; sequence SAQTQPASSGPAPFGATPSTN.

In terms of assembly, interacts with FCHO1. Interacts with EPS15R and EPS15. Post-translationally, O-glycosylated. Expressed in the testes (at protein level).

It localises to the nucleus. The protein resides in the cytoplasmic vesicle. Required for vesicle docking or fusion during acrosome biogenesis. May play a role in RNA trafficking or localization. The polypeptide is Arf-GAP domain and FG repeat-containing protein 1 (Agfg1) (Mus musculus (Mouse)).